A 408-amino-acid polypeptide reads, in one-letter code: Dihydrolipoyllysine-residue acetyltransferase component of pyruvate dehydrogenase complex (408 aa).

Positions 2-78 (PIKILMPALS…PVNSLIAVLS (77 aa)) constitute a Lipoyl-binding domain. Lys43 is modified (N6-lipoyllysine). In terms of domain architecture, Peripheral subunit-binding (PSBD) spans 128–165 (FASPLAKRLAKIGDIRLENVQGSGPHGRIVKQDILSYD). His381 is a catalytic residue.

The protein belongs to the 2-oxoacid dehydrogenase family. As to quaternary structure, forms a 24-polypeptide structural core with octahedral symmetry. (R)-lipoate is required as a cofactor.

It carries out the reaction N(6)-[(R)-dihydrolipoyl]-L-lysyl-[protein] + acetyl-CoA = N(6)-[(R)-S(8)-acetyldihydrolipoyl]-L-lysyl-[protein] + CoA. Its function is as follows. The pyruvate dehydrogenase complex catalyzes the overall conversion of pyruvate to acetyl-CoA and CO(2). It contains multiple copies of three enzymatic components: pyruvate dehydrogenase (E1), dihydrolipoamide acetyltransferase (E2) and lipoamide dehydrogenase (E3). In Rickettsia prowazekii (strain Madrid E), this protein is Dihydrolipoyllysine-residue acetyltransferase component of pyruvate dehydrogenase complex (pdhC).